Reading from the N-terminus, the 394-residue chain is Protein arginine N-methyltransferase 8 (394 aa).

Residue G2 is the site of N-myristoyl glycine attachment. The segment at 16–40 is disordered; the sequence is MAENAAESTEVNSPPSQPPQPVVPA. 2 consecutive short sequence motifs (SH3-binding) follow at residues 29–42 and 53–58; these read PPSQ…PAKP and PSCPGR. Residues 30–39 are compositionally biased toward pro residues; sequence PSQPPQPVVP. R58 carries the post-translational modification Omega-N-methylarginine; by autocatalysis. R73 bears the Asymmetric dimethylarginine; by autocatalysis mark. An SAM-dependent MTase PRMT-type domain is found at 73 to 394; the sequence is RDYYFDSYAH…TSVSNDYKMR (322 aa). S-adenosyl-L-methionine-binding positions include H86, R95, G119, 119–122, E141, and E170; that span reads GSGT. Catalysis depends on residues E185 and E194.

The protein belongs to the class I-like SAM-binding methyltransferase superfamily. Protein arginine N-methyltransferase family. PRMT8 subfamily. Homodimer. Tetramer; individual homodimers associates to form a homotetramer. Homooctamer; individual homodimers associates to form a homooctamer and homooligomerization is required for proper localization to the cell membrane. Heterodimer with PRMT1; heterodimerization may recruit PRMT1 activity to the plasma membrane. Interacts with PRMT2 (via the SH3 domain). Interacts with FYN (via the SH3 domain). Interacts with EWS; independently of EWS methylation status. In terms of tissue distribution, brain-specific.

The protein localises to the cell membrane. The enzyme catalyses L-arginyl-[protein] + S-adenosyl-L-methionine = N(omega)-methyl-L-arginyl-[protein] + S-adenosyl-L-homocysteine + H(+). It catalyses the reaction L-arginyl-[protein] + 2 S-adenosyl-L-methionine = N(omega),N(omega)-dimethyl-L-arginyl-[protein] + 2 S-adenosyl-L-homocysteine + 2 H(+). In terms of biological role, S-adenosyl-L-methionine-dependent and membrane-associated arginine methyltransferase that can both catalyze the formation of omega-N monomethylarginine (MMA) and asymmetrical dimethylarginine (aDMA) in proteins such as NIFK, myelin basic protein, histone H4, H2A and H2A/H2B dimer. Able to mono- and dimethylate EWS protein; however its precise role toward EWS remains unclear as it still interacts with fully methylated EWS. The sequence is that of Protein arginine N-methyltransferase 8 from Homo sapiens (Human).